The sequence spans 671 residues: uncharacterized protein (671 aa).

The chain crosses the membrane as a helical span at residues 39-56 (ATVTVVILLLILLLGWGY).

The protein resides in the membrane. This is an uncharacterized protein from Treponema pallidum (strain Nichols).